The chain runs to 35 residues: Mu-theraphotoxin-Pm1a (35 aa).

Intrachain disulfides connect C3–C17, C10–C22, and C16–C29. Position 35 is a phenylalanine amide (F35).

The protein belongs to the neurotoxin 10 (Hwtx-1) family. 62 (Vatx) subfamily. Expressed by the venom gland.

Its subcellular location is the secreted. Its function is as follows. Gating-modifier toxin with weak activity on Nav1.7/SCN9A and Nav1.8/SCN10A. Inhibits Nav1.7/SCN9A peak current (IC(50)=334 nM) and shifts the voltage dependence of activation to more depolarised membrane potentials. Shows 21% peak current inhibition (at 10 uM) on Nav1.8/SCN10A sodium channels. This is Mu-theraphotoxin-Pm1a from Poecilotheria metallica (Metallic blue ornamental tree spider).